Here is a 316-residue protein sequence, read N- to C-terminus: Ribosomal RNA small subunit methyltransferase H (316 aa).

Residues 35–37 (AGH), D55, F84, D105, and Q112 each bind S-adenosyl-L-methionine.

The protein belongs to the methyltransferase superfamily. RsmH family.

It is found in the cytoplasm. The catalysed reaction is cytidine(1402) in 16S rRNA + S-adenosyl-L-methionine = N(4)-methylcytidine(1402) in 16S rRNA + S-adenosyl-L-homocysteine + H(+). In terms of biological role, specifically methylates the N4 position of cytidine in position 1402 (C1402) of 16S rRNA. This chain is Ribosomal RNA small subunit methyltransferase H, found in Streptococcus pneumoniae serotype 4 (strain ATCC BAA-334 / TIGR4).